A 324-amino-acid polypeptide reads, in one-letter code: THUMP domain-containing protein 1 homolog (324 aa).

Disordered regions lie at residues 1–24 and 67–104; these read MEPA…KKYF and SEKP…DDDD. Residues 68-80 show a composition bias toward basic and acidic residues; the sequence is EKPENEPEKKQPE. T99 bears the Phosphothreonine mark. Residue S100 is modified to Phosphoserine. The THUMP domain occupies 154 to 260; the sequence is DIATTGKSMS…RGWCLLSVID (107 aa). A disordered region spans residues 275 to 324; that stretch reads NPSDKKSSGEGDSKSETSEVANGNDKEQAESSEESKSNDDENKDSTENDK. Basic and acidic residues-rich tracts occupy residues 277 to 291 and 298 to 324; these read SDKK…KSET and NDKE…ENDK.

It belongs to the THUMPD1 family.

The polypeptide is THUMP domain-containing protein 1 homolog (Drosophila melanogaster (Fruit fly)).